Consider the following 141-residue polypeptide: Hemoglobin subunit alpha (141 aa).

Residues 1 to 141 (VLSPADKTNV…VSTVLTSKYR (141 aa)) form the Globin domain. At Ser-3 the chain carries Phosphoserine. Lys-7 bears the N6-succinyllysine mark. Thr-8 bears the Phosphothreonine mark. Position 11 is an N6-succinyllysine (Lys-11). An N6-acetyllysine; alternate modification is found at Lys-16. Lys-16 carries the N6-succinyllysine; alternate modification. Residue Tyr-24 is modified to Phosphotyrosine. Position 40 is an N6-succinyllysine (Lys-40). An O2-binding site is contributed by His-58. His-87 provides a ligand contact to heme b. Phosphoserine is present on Ser-102. The residue at position 108 (Thr-108) is a Phosphothreonine. Ser-124 and Ser-131 each carry phosphoserine. Residues Thr-134 and Thr-137 each carry the phosphothreonine modification. The residue at position 138 (Ser-138) is a Phosphoserine.

The protein belongs to the globin family. As to quaternary structure, heterotetramer of two alpha chains and two beta chains. Red blood cells.

Its function is as follows. Involved in oxygen transport from the lung to the various peripheral tissues. Functionally, hemopressin acts as an antagonist peptide of the cannabinoid receptor CNR1. Hemopressin-binding efficiently blocks cannabinoid receptor CNR1 and subsequent signaling. The chain is Hemoglobin subunit alpha (HBA) from Tursiops truncatus (Atlantic bottle-nosed dolphin).